The chain runs to 295 residues: Nitrogenase iron protein (295 aa).

10 to 17 (GKGGIGKS) contributes to the ATP binding site. [4Fe-4S] cluster is bound at residue C98. Position 101 is an ADP-ribosylarginine; by dinitrogenase reductase ADP-ribosyltransferase (R101). [4Fe-4S] cluster is bound at residue C133.

It belongs to the NifH/BchL/ChlL family. In terms of assembly, homodimer. [4Fe-4S] cluster serves as cofactor. Post-translationally, the reversible ADP-ribosylation of Arg-101 inactivates the nitrogenase reductase and regulates nitrogenase activity.

It catalyses the reaction N2 + 8 reduced [2Fe-2S]-[ferredoxin] + 16 ATP + 16 H2O = H2 + 8 oxidized [2Fe-2S]-[ferredoxin] + 2 NH4(+) + 16 ADP + 16 phosphate + 6 H(+). In terms of biological role, the key enzymatic reactions in nitrogen fixation are catalyzed by the nitrogenase complex, which has 2 components: the iron protein and the molybdenum-iron protein. In Tolumonas auensis (strain DSM 9187 / NBRC 110442 / TA 4), this protein is Nitrogenase iron protein.